The primary structure comprises 121 residues: Large ribosomal subunit protein uL22 (121 aa).

It belongs to the universal ribosomal protein uL22 family. As to quaternary structure, part of the 50S ribosomal subunit.

In terms of biological role, this protein binds specifically to 23S rRNA; its binding is stimulated by other ribosomal proteins, e.g. L4, L17, and L20. It is important during the early stages of 50S assembly. It makes multiple contacts with different domains of the 23S rRNA in the assembled 50S subunit and ribosome. The globular domain of the protein is located near the polypeptide exit tunnel on the outside of the subunit, while an extended beta-hairpin is found that lines the wall of the exit tunnel in the center of the 70S ribosome. The sequence is that of Large ribosomal subunit protein uL22 from Paenarthrobacter aurescens (strain TC1).